Reading from the N-terminus, the 495-residue chain is Glycogen synthase (495 aa).

Lysine 15 is a binding site for ADP-alpha-D-glucose.

This sequence belongs to the glycosyltransferase 1 family. Bacterial/plant glycogen synthase subfamily.

It carries out the reaction [(1-&gt;4)-alpha-D-glucosyl](n) + ADP-alpha-D-glucose = [(1-&gt;4)-alpha-D-glucosyl](n+1) + ADP + H(+). Its pathway is glycan biosynthesis; glycogen biosynthesis. Its function is as follows. Synthesizes alpha-1,4-glucan chains using ADP-glucose. The polypeptide is Glycogen synthase (Variovorax paradoxus (strain S110)).